Reading from the N-terminus, the 199-residue chain is NAD(P)H dehydrogenase (quinone) (199 aa).

The 187-residue stretch at 4-190 (VLVLYYSAYG…AGARYQGKTI (187 aa)) folds into the Flavodoxin-like domain. Residues 10–15 (SAYGHI) and 78–80 (TRF) contribute to the FMN site. An NAD(+)-binding site is contributed by tyrosine 12. Residue tryptophan 98 participates in substrate binding. Residues 113 to 119 (STATQHG) and histidine 134 contribute to the FMN site.

Belongs to the WrbA family. Requires FMN as cofactor.

It catalyses the reaction a quinone + NADH + H(+) = a quinol + NAD(+). It carries out the reaction a quinone + NADPH + H(+) = a quinol + NADP(+). This Rhodopseudomonas palustris (strain BisB5) protein is NAD(P)H dehydrogenase (quinone).